The following is a 433-amino-acid chain: Bifunctional protein GlmU (433 aa).

The pyrophosphorylase stretch occupies residues 1–226 (MLSVIILAAG…EECFLGVNSQ (226 aa)). Residues 7-10 (LAAG), K21, and 80-81 (GT) each bind UDP-N-acetyl-alpha-D-glucosamine. Residue D106 coordinates Mg(2+). Residues G138, E152, N167, and N224 each coordinate UDP-N-acetyl-alpha-D-glucosamine. N224 is a Mg(2+) binding site. The segment at 227 to 247 (TERAKAEEIMLERLRKNAMDL) is linker. The tract at residues 248–433 (GVVMQLPNSI…NGYFKFFKKP (186 aa)) is N-acetyltransferase. R311 and K328 together coordinate UDP-N-acetyl-alpha-D-glucosamine. H339 functions as the Proton acceptor in the catalytic mechanism. 2 residues coordinate UDP-N-acetyl-alpha-D-glucosamine: Y342 and N353. Acetyl-CoA is bound by residues A356, 362–363 (NY), S381, S399, and R416.

This sequence in the N-terminal section; belongs to the N-acetylglucosamine-1-phosphate uridyltransferase family. In the C-terminal section; belongs to the transferase hexapeptide repeat family. As to quaternary structure, homotrimer. Requires Mg(2+) as cofactor.

The protein localises to the cytoplasm. The catalysed reaction is alpha-D-glucosamine 1-phosphate + acetyl-CoA = N-acetyl-alpha-D-glucosamine 1-phosphate + CoA + H(+). It catalyses the reaction N-acetyl-alpha-D-glucosamine 1-phosphate + UTP + H(+) = UDP-N-acetyl-alpha-D-glucosamine + diphosphate. Its pathway is nucleotide-sugar biosynthesis; UDP-N-acetyl-alpha-D-glucosamine biosynthesis; N-acetyl-alpha-D-glucosamine 1-phosphate from alpha-D-glucosamine 6-phosphate (route II): step 2/2. The protein operates within nucleotide-sugar biosynthesis; UDP-N-acetyl-alpha-D-glucosamine biosynthesis; UDP-N-acetyl-alpha-D-glucosamine from N-acetyl-alpha-D-glucosamine 1-phosphate: step 1/1. It participates in bacterial outer membrane biogenesis; LPS lipid A biosynthesis. Catalyzes the last two sequential reactions in the de novo biosynthetic pathway for UDP-N-acetylglucosamine (UDP-GlcNAc). The C-terminal domain catalyzes the transfer of acetyl group from acetyl coenzyme A to glucosamine-1-phosphate (GlcN-1-P) to produce N-acetylglucosamine-1-phosphate (GlcNAc-1-P), which is converted into UDP-GlcNAc by the transfer of uridine 5-monophosphate (from uridine 5-triphosphate), a reaction catalyzed by the N-terminal domain. In Helicobacter pylori (strain ATCC 700392 / 26695) (Campylobacter pylori), this protein is Bifunctional protein GlmU.